Reading from the N-terminus, the 204-residue chain is Molybdenum cofactor guanylyltransferase (204 aa).

GTP contacts are provided by residues 12 to 14 (LAG), Lys-25, Asn-53, Asp-71, and Asp-101. Asp-101 is a Mg(2+) binding site.

Belongs to the MobA family. In terms of assembly, monomer. The cofactor is Mg(2+).

The protein localises to the cytoplasm. It catalyses the reaction Mo-molybdopterin + GTP + H(+) = Mo-molybdopterin guanine dinucleotide + diphosphate. Functionally, transfers a GMP moiety from GTP to Mo-molybdopterin (Mo-MPT) cofactor (Moco or molybdenum cofactor) to form Mo-molybdopterin guanine dinucleotide (Mo-MGD) cofactor. The chain is Molybdenum cofactor guanylyltransferase from Ralstonia nicotianae (strain ATCC BAA-1114 / GMI1000) (Ralstonia solanacearum).